Reading from the N-terminus, the 445-residue chain is Histidinol dehydrogenase (445 aa).

NAD(+) is bound by residues tyrosine 134, glutamine 198, and asparagine 226. Threonine 249, glutamine 271, and histidine 274 together coordinate substrate. 2 residues coordinate Zn(2+): glutamine 271 and histidine 274. Catalysis depends on proton acceptor residues glutamate 340 and histidine 341. Residues histidine 341, aspartate 374, glutamate 428, and histidine 433 each coordinate substrate. Position 374 (aspartate 374) interacts with Zn(2+). Position 433 (histidine 433) interacts with Zn(2+).

The protein belongs to the histidinol dehydrogenase family. It depends on Zn(2+) as a cofactor.

It catalyses the reaction L-histidinol + 2 NAD(+) + H2O = L-histidine + 2 NADH + 3 H(+). It participates in amino-acid biosynthesis; L-histidine biosynthesis; L-histidine from 5-phospho-alpha-D-ribose 1-diphosphate: step 9/9. In terms of biological role, catalyzes the sequential NAD-dependent oxidations of L-histidinol to L-histidinaldehyde and then to L-histidine. This chain is Histidinol dehydrogenase, found in Nocardia farcinica (strain IFM 10152).